The following is a 63-amino-acid chain: Omega-conotoxin Eu1.6 (63 aa).

An N-terminal signal peptide occupies residues 1-21; that stretch reads MGMRMMFTVFLLVVLATTVVS. The propeptide occupies 22 to 47; that stretch reads FTSDRAPDGRNAAAKAFGLITPTVRK. 2 cysteine pairs are disulfide-bonded: Cys-49-Cys-55 and Cys-50-Cys-63. Residues 51–53 form a ser-Xaa-Pro motif, crucial for potent interaction with nAChR region; sequence SNP.

Belongs to the conotoxin A superfamily. In terms of tissue distribution, expressed by the venom duct.

It localises to the secreted. In terms of biological role, this amidated peptide potently and teversibly inhibits Cav2.2/CACNA1B. Steady-state inactivation is enhanced at hyperpolarized membrane potentials. Also shows a weak interaction at alpha-3-beta-4/ CHRNA3-CHRNB4 and alpha-7/CHRNA7 nAChRs subtypes. In vivo, exhibits a potent analgesic activity in rat partial sciatic nerve injury and chronic constriction injury models. The polypeptide is Omega-conotoxin Eu1.6 (Conus eburneus (Ivory cone)).